Here is an 863-residue protein sequence, read N- to C-terminus: MHEKYVPSDVESAAQGQWRAIDAYKTTEVTDKPKFYCVSMLPYPSGKLHMGHVRNYTINDVMYRYLRMNGYNVLMPMGWDAFGMPAENAAMANNVPPAKWTYDNIAYMKKQMQSMGLAIDWSREVATCSPDYYKWNQWLFLKMLEKGIAYKKTGTVNWDPVDQTVLANEQVIDGRGWRSGALVEKREIPMYYMRITQYADELLNDLEGLGWPERVKIMQQNWIGKSFGVNFGFPYEIDGEQKLLRVFTTRADTIMGVTFCAIAAEHPLATRLAKDKPELQAFIEECKRGGVAEADVATMEKKGMATGFTVTHPLTQEQVEVWIGNYVLMSYGEGAVMGVPAHDERDFAFVKKYGLPVRQVVAVEGKEFSTEAWQEWYGEKTGTLINSGKYDGLNYEQAVDRIAADLKELGLGDKQITWRLRDWGVSRQRYWGTPIPIIHCPTCGDVPVPEKDLPVVLPEDLVPDGTGNPLARSEAFVNCTCPTCGGAAKRETDTMDTFVDSSWYFYRYASPGAKTMVDERTDYWAPMDQYIGGIEHAILHLLYSRFWAKVMRDLGLIRFGEPAKNLLTQGMVLNETYYRENEAGKKTWYNPAEVTVSFDDKGRPVGAILNEDGQPVVLGGVEKMSKSKNNGVDPQLLIDQHGADTARLFVMFAAPPEQSLEWSGSGVEGASRFLRRVWSFSQANEAALRQGGTFDAAQLSDVEKVLRREIYSVLKQADFDYQRLQYNTVVSAAMKMLNALDSAKGARPAVLRETCSVMLRVLYPVVPHLTFQLWQELGYADELGSLLDAPWPKVDEKALEQSEIELVLQVNGKVRGAITVAKDASREAIEQLAAAHEMVAKFSEGKAPKKIVVVPGRLVNVVV.

The 'HIGH' region motif lies at 42-52 (PYPSGKLHMGH). A 'KMSKS' region motif is present at residues 623–627 (KMSKS). Lys626 contacts ATP.

Belongs to the class-I aminoacyl-tRNA synthetase family.

It localises to the cytoplasm. It catalyses the reaction tRNA(Leu) + L-leucine + ATP = L-leucyl-tRNA(Leu) + AMP + diphosphate. This is Leucine--tRNA ligase from Paraburkholderia xenovorans (strain LB400).